The following is a 180-amino-acid chain: Large ribosomal subunit protein uL5 (180 aa).

This sequence belongs to the universal ribosomal protein uL5 family. As to quaternary structure, part of the 50S ribosomal subunit; part of the 5S rRNA/L5/L18/L25 subcomplex. Contacts the 5S rRNA and the P site tRNA. Forms a bridge to the 30S subunit in the 70S ribosome.

In terms of biological role, this is one of the proteins that bind and probably mediate the attachment of the 5S RNA into the large ribosomal subunit, where it forms part of the central protuberance. In the 70S ribosome it contacts protein S13 of the 30S subunit (bridge B1b), connecting the 2 subunits; this bridge is implicated in subunit movement. Contacts the P site tRNA; the 5S rRNA and some of its associated proteins might help stabilize positioning of ribosome-bound tRNAs. The sequence is that of Large ribosomal subunit protein uL5 from Streptococcus sanguinis (strain SK36).